The primary structure comprises 122 residues: Small ribosomal subunit protein uS12cz/uS12cy (122 aa).

The protein belongs to the universal ribosomal protein uS12 family. As to quaternary structure, part of the 30S ribosomal subunit.

It is found in the plastid. Its subcellular location is the chloroplast. Its function is as follows. With S4 and S5 plays an important role in translational accuracy. Located at the interface of the 30S and 50S subunits. In Triticum aestivum (Wheat), this protein is Small ribosomal subunit protein uS12cz/uS12cy (rps12-A).